The chain runs to 191 residues: Protein adenylyltransferase NmFic (191 aa).

Residues 37 to 162 enclose the Fido domain; sequence GTTAGLQQIH…NDLELRFLLK (126 aa). Residues K67, 104 to 107, 112 to 118, and 140 to 143 contribute to the ATP site; these read NIAH, GNGRSTR, and KTLY. Residues 182–187 carry the Inhibitory (S/T)XXXE(G/N) motif motif; sequence SYYYEG. Y183 carries the O-AMP-tyrosine; in vitro modification. Position 186 (E186) interacts with ATP.

As to quaternary structure, homodimer. Auto-AMPylation at Tyr-183 in vitro.

The catalysed reaction is L-tyrosyl-[protein] + ATP = O-(5'-adenylyl)-L-tyrosyl-[protein] + diphosphate. It carries out the reaction L-threonyl-[protein] + ATP = 3-O-(5'-adenylyl)-L-threonyl-[protein] + diphosphate. Adenylyltransferase activity is inhibited by the inhibitory helix present at the C-terminus: Glu-186 binds ATP and competes with ATP-binding at Arg-118, thereby preventing adenylyltransferase activity. Activation dissociates ATP-binding from Glu-186, allowing ordered binding of the entire ATP moiety with the alpha-phosphate in an orientation that is productive for accepting an incoming target hydroxyl side chain. Its function is as follows. Adenylyltransferase that mediates the addition of adenosine 5'-monophosphate (AMP) to specific residues of target proteins. The protein is Protein adenylyltransferase NmFic of Neisseria meningitidis serogroup B (strain ATCC BAA-335 / MC58).